Here is a 272-residue protein sequence, read N- to C-terminus: Ribosomal RNA small subunit methyltransferase A (272 aa).

S-adenosyl-L-methionine-binding residues include Asn-15, Ile-17, Gly-42, Glu-64, Asp-90, and Asn-109.

Belongs to the class I-like SAM-binding methyltransferase superfamily. rRNA adenine N(6)-methyltransferase family. RsmA subfamily.

The protein localises to the cytoplasm. The catalysed reaction is adenosine(1518)/adenosine(1519) in 16S rRNA + 4 S-adenosyl-L-methionine = N(6)-dimethyladenosine(1518)/N(6)-dimethyladenosine(1519) in 16S rRNA + 4 S-adenosyl-L-homocysteine + 4 H(+). In terms of biological role, specifically dimethylates two adjacent adenosines (A1518 and A1519) in the loop of a conserved hairpin near the 3'-end of 16S rRNA in the 30S particle. May play a critical role in biogenesis of 30S subunits. The chain is Ribosomal RNA small subunit methyltransferase A from Wolbachia sp. subsp. Drosophila simulans (strain wRi).